The sequence spans 281 residues: NAD kinase (281 aa).

Asp61 (proton acceptor) is an active-site residue. NAD(+) is bound by residues Asp61–Gly62, Asn134–Asp135, Arg145, Asp164, Thr175–Ser180, and Gln234.

This sequence belongs to the NAD kinase family. A divalent metal cation is required as a cofactor.

It is found in the cytoplasm. It catalyses the reaction NAD(+) + ATP = ADP + NADP(+) + H(+). Its function is as follows. Involved in the regulation of the intracellular balance of NAD and NADP, and is a key enzyme in the biosynthesis of NADP. Catalyzes specifically the phosphorylation on 2'-hydroxyl of the adenosine moiety of NAD to yield NADP. The polypeptide is NAD kinase (Clostridium botulinum (strain 657 / Type Ba4)).